The chain runs to 118 residues: Small ribosomal subunit protein uS13 (118 aa).

The tract at residues 97–118 is disordered; the sequence is VRGQRTKTNARTCKGPRKAIKK.

Belongs to the universal ribosomal protein uS13 family. As to quaternary structure, part of the 30S ribosomal subunit. Forms a loose heterodimer with protein S19. Forms two bridges to the 50S subunit in the 70S ribosome.

Its function is as follows. Located at the top of the head of the 30S subunit, it contacts several helices of the 16S rRNA. In the 70S ribosome it contacts the 23S rRNA (bridge B1a) and protein L5 of the 50S subunit (bridge B1b), connecting the 2 subunits; these bridges are implicated in subunit movement. Contacts the tRNAs in the A and P-sites. The polypeptide is Small ribosomal subunit protein uS13 (Buchnera aphidicola subsp. Schizaphis graminum (strain Sg)).